The primary structure comprises 134 residues: Small ribosomal subunit protein uS9c (134 aa).

Belongs to the universal ribosomal protein uS9 family.

The protein localises to the plastid. It is found in the chloroplast. The sequence is that of Small ribosomal subunit protein uS9c (rps9) from Guillardia theta (Cryptophyte).